Consider the following 227-residue polypeptide: MKINFLTLFPRYFEPLINESIIKKAVDKKILEFNVVDFRDFTKSKHRKVDDEIYGGGHGLLLQVEPIDLALDSLENRGGYKILVTPQGKIFDQKMANKLAKYDQITLISGRYEGFDERVTYLVDEEISIGDYVLTGGELPAMVIADSICRLVPGVIKKESVENDSFQNEGLLDYPQYTRPREYKNMKVPEVLFNGNHKEISEWKLKAQLEKTKKNRPDILERIKNEK.

S-adenosyl-L-methionine is bound by residues Gly-110 and 129–134 (IGDYVL).

The protein belongs to the RNA methyltransferase TrmD family. As to quaternary structure, homodimer.

The protein localises to the cytoplasm. It catalyses the reaction guanosine(37) in tRNA + S-adenosyl-L-methionine = N(1)-methylguanosine(37) in tRNA + S-adenosyl-L-homocysteine + H(+). Specifically methylates guanosine-37 in various tRNAs. The chain is tRNA (guanine-N(1)-)-methyltransferase from Mycoplasmopsis synoviae (strain 53) (Mycoplasma synoviae).